A 217-amino-acid chain; its full sequence is 3,4-dihydroxy-2-butanone 4-phosphate synthase (217 aa).

Residues 37–38 (RE), aspartate 42, 150–154 (RRGHT), and glutamate 174 each bind D-ribulose 5-phosphate. Glutamate 38 lines the Mg(2+) pocket. A Mg(2+)-binding site is contributed by histidine 153.

Belongs to the DHBP synthase family. As to quaternary structure, homodimer. Mg(2+) serves as cofactor. Mn(2+) is required as a cofactor.

It catalyses the reaction D-ribulose 5-phosphate = (2S)-2-hydroxy-3-oxobutyl phosphate + formate + H(+). It participates in cofactor biosynthesis; riboflavin biosynthesis; 2-hydroxy-3-oxobutyl phosphate from D-ribulose 5-phosphate: step 1/1. Catalyzes the conversion of D-ribulose 5-phosphate to formate and 3,4-dihydroxy-2-butanone 4-phosphate. In Shewanella sediminis (strain HAW-EB3), this protein is 3,4-dihydroxy-2-butanone 4-phosphate synthase.